The following is a 217-amino-acid chain: UPF0502 protein KPK_3478 (217 aa).

This sequence belongs to the UPF0502 family.

This Klebsiella pneumoniae (strain 342) protein is UPF0502 protein KPK_3478.